The sequence spans 124 residues: Secreted RxLR effector protein 49 (124 aa).

A signal peptide spans 1–22 (MIRRSPLVAVILFVAITHVVLA). Residues 57–60 (RSLR) carry the RxLR motif.

Belongs to the RxLR effector family.

It localises to the secreted. The protein resides in the host cytoplasm. The protein localises to the host nucleus. Functionally, effector that acts as a broad suppressor of cell death to interrupt plant immunity. Inhibits cell death induced by cell death-inducing proteins, including the PAMP elicitor INF1 from P.infestans. This Plasmopara viticola (Downy mildew of grapevine) protein is Secreted RxLR effector protein 49.